Here is a 131-residue protein sequence, read N- to C-terminus: Profilin-1 (131 aa).

The protein belongs to the profilin family. As to quaternary structure, occurs in many kinds of cells as a complex with monomeric actin in a 1:1 ratio.

It is found in the cytoplasm. The protein resides in the cytoskeleton. In terms of biological role, binds to actin and affects the structure of the cytoskeleton. At high concentrations, profilin prevents the polymerization of actin, whereas it enhances it at low concentrations. By binding to PIP2, it inhibits the formation of IP3 and DG. This Hordeum vulgare (Barley) protein is Profilin-1 (PRO1).